The primary structure comprises 200 residues: Phosphoheptose isomerase (200 aa).

In terms of domain architecture, SIS spans 37 to 199 (VLGCITAGGK…DVQLLGEQDL (163 aa)). 52–54 (NGG) contributes to the substrate binding site. Zn(2+) is bound by residues His-61 and Glu-65. Substrate contacts are provided by residues Glu-65, 94–95 (ND), 120–122 (TTS), Ser-125, and Gln-175. Residues Gln-175 and His-183 each coordinate Zn(2+).

Belongs to the SIS family. GmhA subfamily. In terms of assembly, homotetramer. It depends on Zn(2+) as a cofactor.

The protein resides in the cytoplasm. It catalyses the reaction 2 D-sedoheptulose 7-phosphate = D-glycero-alpha-D-manno-heptose 7-phosphate + D-glycero-beta-D-manno-heptose 7-phosphate. It participates in carbohydrate biosynthesis; D-glycero-D-manno-heptose 7-phosphate biosynthesis; D-glycero-alpha-D-manno-heptose 7-phosphate and D-glycero-beta-D-manno-heptose 7-phosphate from sedoheptulose 7-phosphate: step 1/1. Functionally, catalyzes the isomerization of sedoheptulose 7-phosphate in D-glycero-D-manno-heptose 7-phosphate. This chain is Phosphoheptose isomerase, found in Methylibium petroleiphilum (strain ATCC BAA-1232 / LMG 22953 / PM1).